Reading from the N-terminus, the 952-residue chain is MAKAISLEEIKNETVDLEKIPIEEVFEQLKCTREGLSADEGASRLQIFGPNKLEEKNESKILKFLGFMWNPLSWVMEAAAVMAIALANGDGKPPDWQDFIGIICLLVINSTISFIEENNAGNAAAALMAGLAPKTKVLRDGRWSEQEAAILVPGDIISVKLGDIIPADARLLEGDPLKIDQSALTGESLPVTKNPGDEVFSGSTCKQGELEAVVIATGVHTFFGKAAHLVDSTNNVGHFQKVLTAIGNFCICSIAIGMLVEIIVMYPIQHRKYRDGIDNLLVLLIGGIPIAMPTVLSVTMAIGSHRLSQQGAITKRMTAIEEMAGMDVLCSDKTGTLTLNKLSVDRNLVEVFAKGVDKEYVLLLAARASRVENQDAIDACMVGMLADPKEARAGIREVHFLPFNPVDKRTALTYIDNNNNWHRASKGAPEQILDLCNAKEDVRRKVHSMMDKYAERGLRSLAVARRTVPEKSKESPGGRWEFVGLLPLFDPPRHDSAETIRRALNLGVNVKMITGDQLAIAKETGRRLGMGTNMYPSASLLGQDKDSAIASLPIEELIEKADGFAGVFPEHKYEIVKKLQERKHIVGMTGDGVNDAPALKKADIGIAVADATDAARGASDIVLTEPGLSVIISAVLTSRAIFQRMKNYTIYAVSITIRIVFGFMFIALIWKYDFSAFMVLIIAILNDGTIMTISKDRVKPSPMPDSWKLKEIFATGVVLGGYQALMTVVFFWAMHDTDFFSDKFGVKSLRNSDEEMMSALYLQVSIISQALIFVTRSRSWSFLERPGMLLVIAFMIAQLVATLIAVYANWAFARVKGCGWGWAGVIWLYSIIFYLPLDIMKFAIRYILSGKAWNNLLDNKTAFTTKKDYGKEEREAQWALAQRTLHGLQPPEATNLFNEKNSYRELSEIAEQAKRRAEMARLRELHTLKGHVESVVKLKGLDIETIQQHYTV.

Residues 1-64 (MAKAISLEEI…EKNESKILKF (64 aa)) lie on the Cytoplasmic side of the membrane. The chain crosses the membrane as a helical span at residues 65–84 (LGFMWNPLSWVMEAAAVMAI). Residues 85 to 96 (ALANGDGKPPDW) lie on the Extracellular side of the membrane. Residues 97–117 (QDFIGIICLLVINSTISFIEE) form a helical membrane-spanning segment. The Cytoplasmic segment spans residues 118–246 (NNAGNAAAAL…GHFQKVLTAI (129 aa)). A helical membrane pass occupies residues 247–267 (GNFCICSIAIGMLVEIIVMYP). The Extracellular segment spans residues 268 to 277 (IQHRKYRDGI). The chain crosses the membrane as a helical span at residues 278 to 299 (DNLLVLLIGGIPIAMPTVLSVT). Topologically, residues 300 to 646 (MAIGSHRLSQ…TSRAIFQRMK (347 aa)) are cytoplasmic. Asp-332 serves as the catalytic 4-aspartylphosphate intermediate. The Mg(2+) site is built by Asp-591 and Asp-595. A helical membrane pass occupies residues 647–668 (NYTIYAVSITIRIVFGFMFIAL). Residues 669 to 673 (IWKYD) are Extracellular-facing. Residues 674-696 (FSAFMVLIIAILNDGTIMTISKD) form a helical membrane-spanning segment. At 697–712 (RVKPSPMPDSWKLKEI) the chain is on the cytoplasmic side. Residues 713 to 733 (FATGVVLGGYQALMTVVFFWA) form a helical membrane-spanning segment. Residues 734–754 (MHDTDFFSDKFGVKSLRNSDE) lie on the Extracellular side of the membrane. A helical transmembrane segment spans residues 755–775 (EMMSALYLQVSIISQALIFVT). Residues 776–787 (RSRSWSFLERPG) lie on the Cytoplasmic side of the membrane. A helical transmembrane segment spans residues 788–808 (MLLVIAFMIAQLVATLIAVYA). Residues 809 to 817 (NWAFARVKG) are Extracellular-facing. A helical membrane pass occupies residues 818 to 838 (CGWGWAGVIWLYSIIFYLPLD). At 839-952 (IMKFAIRYIL…IETIQQHYTV (114 aa)) the chain is on the cytoplasmic side.

This sequence belongs to the cation transport ATPase (P-type) (TC 3.A.3) family. Type IIIA subfamily. Expressed at high levels in root, stem, leaf and flower.

It is found in the cell membrane. It carries out the reaction ATP + H2O + H(+)(in) = ADP + phosphate + 2 H(+)(out). In terms of biological role, the plasma membrane ATPase of plants and fungi is a hydrogen ion pump. The proton gradient it generates drives the active transport of nutrients by H(+)-symport. The resulting external acidification and/or internal alkinization may mediate growth responses. In Nicotiana plumbaginifolia (Leadwort-leaved tobacco), this protein is Plasma membrane ATPase 4 (PMA4).